The sequence spans 228 residues: Ribonuclease H (228 aa).

One can recognise an RNase H type-1 domain in the interval 2 to 142 (GPMRTIVYAD…ADRLATLGRR (141 aa)). Positions 11, 49, 71, and 134 each coordinate Mg(2+).

It belongs to the RNase H family. In terms of assembly, monomer. Mg(2+) serves as cofactor.

It localises to the cytoplasm. The catalysed reaction is Endonucleolytic cleavage to 5'-phosphomonoester.. Its function is as follows. Endonuclease that specifically degrades the RNA of RNA-DNA hybrids. This is Ribonuclease H from Methylorubrum extorquens (strain PA1) (Methylobacterium extorquens).